The primary structure comprises 689 residues: Glycine--tRNA ligase beta subunit (689 aa).

Belongs to the class-II aminoacyl-tRNA synthetase family. As to quaternary structure, tetramer of two alpha and two beta subunits.

Its subcellular location is the cytoplasm. It catalyses the reaction tRNA(Gly) + glycine + ATP = glycyl-tRNA(Gly) + AMP + diphosphate. This is Glycine--tRNA ligase beta subunit from Shewanella baltica (strain OS185).